The primary structure comprises 494 residues: Transmembrane and coiled-coil domain-containing protein 6 (494 aa).

Residues 15–39 are a coiled coil; sequence GVEELRRRRREREAALRKARREQQL. 2 helical membrane passes run 338–358 and 386–406; these read LVAA…ALLP and PLLQ…TVLC.

It is found in the membrane. This is Transmembrane and coiled-coil domain-containing protein 6 (Tmco6) from Mus musculus (Mouse).